Here is a 639-residue protein sequence, read N- to C-terminus: MASPATQTANAIAAINNRSNLVIPEIDFTQHQLENGEIVSTTERVIKDVQAPAMYVPTDDQFWSKVDKTKPDIAFLKNHFYREGRLTEEQALYILEKGGELLRSEPNLLEVDAPITVCGDIHGQYYDLMKLFEVGGNPADTRYLFLGDYVDRGYFSIECVLYLWSLKMWYPDTLFLLRGNHECRHLTDYFTFKLECKHKYSETVYNACMESFCNLPLAAVMNKQFLCIHGGLSPELHTLDDLRSINRFREPPTQGLMCDILWADPLEDFGSEKTNENFLHNHVRGCSYFFTYNAACQFLERNNLLSIIRAHEAQDAGYRMYRKTKTTGFPSVMTIFSAPNYLDVYSNKAAVLKYESNVMNIRQFNCTPHPYWLPNFMDVFTWSLPFVGEKITDMLIAILNCCTKEELEEEDEEFPLNAPEPTDAESAAERRQIIKNKILAVGRMSRVFSLLREESERVSELKSISGSNALPAGMLASGAEGIKEAIQGFEDARKSDIENERLPPDIIDPDEDKPASPSASPIMPATPEEIPSEIPYDSPITGTPRTPISSAIASGSPGSPGTPTSPSIGGPPLTAWRPGHGRRTSLGTTKTSPSTRRRSLENTMHLIRDVVGGKDAQGDGQLERLAEVISSPTKGGQGE.

Residues aspartate 120, histidine 122, and aspartate 148 each coordinate Fe cation. Aspartate 148 and asparagine 180 together coordinate Zn(2+). Histidine 181 serves as the catalytic Proton donor. 2 residues coordinate Zn(2+): histidine 229 and histidine 311. The span at 494-503 shows a compositional bias: basic and acidic residues; sequence KSDIENERLP. Residues 494-602 are disordered; it reads KSDIENERLP…PSTRRRSLEN (109 aa). 2 stretches are compositionally biased toward low complexity: residues 515–527 and 546–572; these read ASPSASPIMPATP and TPISSAIASGSPGSPGTPTSPSIGGPP.

Belongs to the PPP phosphatase family. PP-2B subfamily. In terms of assembly, composed of two components (A and B), the A component is the catalytic subunit and the B component confers calcium sensitivity. Requires Fe(3+) as cofactor. The cofactor is Zn(2+).

The enzyme catalyses O-phospho-L-seryl-[protein] + H2O = L-seryl-[protein] + phosphate. It carries out the reaction O-phospho-L-threonyl-[protein] + H2O = L-threonyl-[protein] + phosphate. Calcium-dependent, calmodulin-stimulated protein phosphatase. This subunit may have a role in the calmodulin activation of calcineurin. The protein is Serine/threonine-protein phosphatase 2B catalytic subunit A1 (CNA1) of Cryptococcus neoformans var. grubii serotype A (strain H99 / ATCC 208821 / CBS 10515 / FGSC 9487) (Filobasidiella neoformans var. grubii).